We begin with the raw amino-acid sequence, 107 residues long: Small ribosomal subunit protein bS16 (107 aa).

A disordered region spans residues 85-107 (REARNNPEKAVPRKERKAAEAGK).

Belongs to the bacterial ribosomal protein bS16 family.

In Rhodopseudomonas palustris (strain BisB5), this protein is Small ribosomal subunit protein bS16.